A 317-amino-acid polypeptide reads, in one-letter code: tRNA N6-adenosine threonylcarbamoyltransferase (317 aa).

Positions 110 and 114 each coordinate Fe cation. Residues 132–136 (VVSGG), aspartate 165, glycine 178, aspartate 182, and asparagine 271 contribute to the substrate site. Aspartate 300 provides a ligand contact to Fe cation.

This sequence belongs to the KAE1 / TsaD family. Fe(2+) is required as a cofactor.

It localises to the cytoplasm. The catalysed reaction is L-threonylcarbamoyladenylate + adenosine(37) in tRNA = N(6)-L-threonylcarbamoyladenosine(37) in tRNA + AMP + H(+). Its function is as follows. Required for the formation of a threonylcarbamoyl group on adenosine at position 37 (t(6)A37) in tRNAs that read codons beginning with adenine. Is involved in the transfer of the threonylcarbamoyl moiety of threonylcarbamoyl-AMP (TC-AMP) to the N6 group of A37, together with TsaE and TsaB. TsaD likely plays a direct catalytic role in this reaction. The sequence is that of tRNA N6-adenosine threonylcarbamoyltransferase from Mesoplasma florum (strain ATCC 33453 / NBRC 100688 / NCTC 11704 / L1) (Acholeplasma florum).